A 141-amino-acid polypeptide reads, in one-letter code: ATP synthase epsilon chain (141 aa).

Belongs to the ATPase epsilon chain family. In terms of assembly, F-type ATPases have 2 components, CF(1) - the catalytic core - and CF(0) - the membrane proton channel. CF(1) has five subunits: alpha(3), beta(3), gamma(1), delta(1), epsilon(1). CF(0) has three main subunits: a, b and c.

The protein resides in the cell inner membrane. Functionally, produces ATP from ADP in the presence of a proton gradient across the membrane. This Thioalkalivibrio sulfidiphilus (strain HL-EbGR7) protein is ATP synthase epsilon chain.